The chain runs to 200 residues: Ras-related protein Rab5 (200 aa).

GTP contacts are provided by residues 17–25 (GDMGAGKSS), 36–42 (LEFQEST), 65–69 (DTAGQ), 123–126 (NKAD), and 153–155 (SAK). An Effector region motif is present at residues 39 to 47 (QESTIGAAF). S-geranylgeranyl cysteine attachment occurs at residues C198 and C199.

The protein belongs to the small GTPase superfamily. Rab family. As to expression, virtually not expressed in leaves, higher in stems and roots, and highest in flowers.

The protein localises to the cell membrane. Protein transport. Probably involved in vesicular traffic. The sequence is that of Ras-related protein Rab5 (RAB5) from Nicotiana tabacum (Common tobacco).